Here is a 229-residue protein sequence, read N- to C-terminus: Histidine biosynthesis bifunctional protein HisIE (229 aa).

The segment at 1–127 (MNTLLDGIDW…APDTSALYGV (127 aa)) is phosphoribosyl-AMP cyclohydrolase. A phosphoribosyl-ATP pyrophosphohydrolase region spans residues 128-229 (VDRLYHELLA…IAEKNSRKDS (102 aa)).

This sequence in the N-terminal section; belongs to the PRA-CH family. In the C-terminal section; belongs to the PRA-PH family.

It localises to the cytoplasm. The catalysed reaction is 1-(5-phospho-beta-D-ribosyl)-ATP + H2O = 1-(5-phospho-beta-D-ribosyl)-5'-AMP + diphosphate + H(+). It carries out the reaction 1-(5-phospho-beta-D-ribosyl)-5'-AMP + H2O = 1-(5-phospho-beta-D-ribosyl)-5-[(5-phospho-beta-D-ribosylamino)methylideneamino]imidazole-4-carboxamide. It participates in amino-acid biosynthesis; L-histidine biosynthesis; L-histidine from 5-phospho-alpha-D-ribose 1-diphosphate: step 2/9. It functions in the pathway amino-acid biosynthesis; L-histidine biosynthesis; L-histidine from 5-phospho-alpha-D-ribose 1-diphosphate: step 3/9. In Wolinella succinogenes (strain ATCC 29543 / DSM 1740 / CCUG 13145 / JCM 31913 / LMG 7466 / NCTC 11488 / FDC 602W) (Vibrio succinogenes), this protein is Histidine biosynthesis bifunctional protein HisIE.